Reading from the N-terminus, the 564-residue chain is Kelch repeat and BTB domain-containing protein A55 (564 aa).

The BTB domain maps to 21–88; the sequence is CDISIVINDE…IYGIPLSLTN (68 aa). Kelch repeat units follow at residues 252–297, 298–346, 347–395, 397–441, 442–492, and 494–539; these read IELI…VLDN, IIYM…ADDE, YIYC…MLNG, IYVM…VHDG, KIYI…SAHN, and LYVG…CEPI.

This sequence belongs to the poxviruses A55 protein family. In terms of assembly, interacts (via BTB domain) with host CUL3.

It localises to the host cytoplasm. In terms of biological role, probable substrate-specific adapter of CUL3-containing E3 ubiquitin-protein ligases which mediate the ubiquitination and subsequent proteasomal degradation of host target proteins. This Bos taurus (Bovine) protein is Kelch repeat and BTB domain-containing protein A55 (KBTB1).